A 620-amino-acid polypeptide reads, in one-letter code: LysM domain receptor-like kinase 3 (620 aa).

Residues 1–23 form the signal peptide; the sequence is MNLKNGLLLFILFLDCVFFKVES. Topologically, residues 24 to 231 are extracellular; that stretch reads KCVKGCDVAL…YSRTGIAKGS (208 aa). Intrachain disulfides connect Cys-25–Cys-92, Cys-29–Cys-154, and Cys-90–Cys-152. Asn-46 carries N-linked (GlcNAc...) asparagine glycosylation. The LysM 1; degenerate domain maps to 46–72; sequence NISNFMQSKIVLTNSFDVIMSYNRDVV. 2 LysM domains span residues 102–148 and 167–210; these read FEYT…KINV and VTYP…VFIP. Chitin is bound by residues 108-114 and 136-142; these read EGDDYDL and DPNHIPV. N-linked (GlcNAc...) asparagine glycans are attached at residues Asn-147 and Asn-199. Residues 232–252 traverse the membrane as a helical segment; sequence AVGIAMAGIFGLLLFVIYIYA. Residues 253-620 are Cytoplasmic-facing; that stretch reads KYFQKKEEEK…QSLINLLSTR (368 aa). Residues 265-278 show a composition bias toward polar residues; the sequence is LPQTSRAFSTQDAS. Residues 265–292 form a disordered region; that stretch reads LPQTSRAFSTQDASGSAEYETSGSSGHA. Ser-269 and Ser-273 each carry phosphoserine. In terms of domain architecture, Protein kinase spans 322–595; sequence FSLDNKIGQG…RSIVVALMTL (274 aa). Residues 328–336 and Lys-349 each bind ATP; that span reads IGQGGFGAV. The active-site Proton acceptor is the Asp-441.

Belongs to the protein kinase superfamily. Ser/Thr protein kinase family. In terms of assembly, forms homodimers and homooligomers. Forms heteromeric complexes with NFP at the cell periphery in nodules. Interacts with PUB1. Post-translationally, autophosphorylated. As to expression, expressed in the epidermal and root hair cells of the developing root hair zone during nonsymbiotic growth. Accumulates in roots and nodules during symbiotic growth with rhizobia. Localized at the cell periphery in a narrow zone of about two cell layers (e.g. L1/L2 zone) at the nodule apex upon infection by rhizobia, from the meristem to the infection zone (at protein level).

Its subcellular location is the cell membrane. It is found in the vacuole lumen. The enzyme catalyses L-seryl-[protein] + ATP = O-phospho-L-seryl-[protein] + ADP + H(+). The catalysed reaction is L-threonyl-[protein] + ATP = O-phospho-L-threonyl-[protein] + ADP + H(+). Putative receptor for S.meliloti Nod factor signals essential for the establishment of the nitrogen-fixing, root nodule symbiosis with S.meliloti. Involved in the control of root hair curling after S.meliloti infection, probably by modulating the reorganization of the microtubular cytoskeleton in epidermal and cortical cells. Regulates a subset of Nod factor-induced genes. The chain is LysM domain receptor-like kinase 3 from Medicago truncatula (Barrel medic).